Reading from the N-terminus, the 304-residue chain is Cell surface-binding protein OPG105 (304 aa).

Residues 1-235 (MPQQLSPINI…NDDTQVYYSG (235 aa)) form the Alpha-carbonic anhydrase domain. Over 1-275 (MPQQLSPINI…YQKYIEGNKT (275 aa)) the chain is Virion surface. The helical transmembrane segment at 276–294 (FAIIAIVFVFILTAILFLM) threads the bilayer. Topologically, residues 295–304 (SQRYSREKQN) are intravirion.

It belongs to the alpha-carbonic anhydrase family. Homodimer; disulfide-linked. Post-translationally, apparently non-glycosylated.

The protein resides in the virion membrane. Its function is as follows. Binds to chondroitin sulfate on the cell surface to provide virion attachment to target cell. The protein is Cell surface-binding protein OPG105 (OPG105) of Monkeypox virus (strain Zaire-96-I-16) (MPX).